Here is a 471-residue protein sequence, read N- to C-terminus: Tumor necrosis factor receptor superfamily member 1A (471 aa).

The first 29 residues, 1–29 (MGLPTVPGLLLPLVLPALLADVYPAGVQG), serve as a signal peptide directing secretion. The Extracellular segment spans residues 30–210 (LVPHPGDLEK…GKDSQDPGTT (181 aa)). TNFR-Cys repeat units lie at residues 43–82 (PCPQGKYNHPQNSTICCTKCHKGTYLYNDCPGPGRDTDCR), 83–125 (VCAP…DTVC), 126–166 (GCRK…DTIC), and 167–195 (HCHMGFFLKGAKCISCHDCKNKECEKLCP). 7 disulfide bridges follow: C44–C58, C59–C72, C62–C81, C84–C99, C102–C117, C105–C125, and C127–C143. N54 carries an N-linked (GlcNAc...) asparagine glycan. 2 N-linked (GlcNAc...) asparagine glycosylation sites follow: N145 and N151. Cystine bridges form between C146–C158, C149–C166, C168–C179, C182–C194, and C185–C190. A helical transmembrane segment spans residues 211-233 (VLLPLVIVFGLCLASFASVVLAC). Residues 234–471 (RYQRWKPKLY…RLASEPRLLW (238 aa)) lie on the Cytoplasmic side of the membrane. Residues 340 to 360 (TPGPPASTHLCTPVQKWEASA) are N-SMase activation domain (NSD). In terms of domain architecture, Death spans 372-457 (PATLYAVVDG…GCLENIEEAL (86 aa)).

As to quaternary structure, binding of TNF to the extracellular domain leads to homotrimerization. The aggregated death domains provide a novel molecular interface that interacts specifically with the death domain of TRADD. Various TRADD-interacting proteins such as TRAFS, RIPK1 and possibly FADD, are recruited to the complex by their association with TRADD. This complex activates at least two distinct signaling cascades, apoptosis and NF-kappa-B signaling. Interacts with BAG4, BABAM2, FEM1B, GRB2, SQSTM1 and TRPC4AP. Interacts directly with NOL3 (via CARD domain); inhibits TNF-signaling pathway. Interacts with SH3RF2, TRADD and RIPK1. SH3RF2 facilitates the recruitment of RIPK1 and TRADD to TNFRSF1A in a TNF-alpha-dependent process. Interacts with PGLYRP1; this interaction is important for cell death induction. Interacts (via death domain) with MADD (via death domain).

It is found in the cell membrane. The protein localises to the golgi apparatus membrane. Its function is as follows. Receptor for TNFSF2/TNF-alpha and homotrimeric TNFSF1/lymphotoxin-alpha. The adapter molecule FADD recruits caspase-8 to the activated receptor. The resulting death-inducing signaling complex (DISC) performs caspase-8 proteolytic activation which initiates the subsequent cascade of caspases (aspartate-specific cysteine proteases) mediating apoptosis. This is Tumor necrosis factor receptor superfamily member 1A (TNFRSF1A) from Bos taurus (Bovine).